We begin with the raw amino-acid sequence, 646 residues long: Peptidylprolyl isomerase domain and WD repeat-containing protein 1 (646 aa).

Residues 1–30 (MAAESGSDFQQRRRRRRDPEEPEKTELSER) form a disordered region. Residue A2 is modified to N-acetylalanine. Basic and acidic residues predominate over residues 17–30 (RDPEEPEKTELSER). 7 WD repeats span residues 80–118 (ASMYERSYMHRDVITHVVCTKTDFIITASHDGHVKFWKK), 124–162 (EFVKHFRSHLGVIESIAVSSEGALFCSVGDDKAMKVFDV), 168–208 (INML…IYDG), 213–252 (QPLHIFDKLHTSPLTQIRLNPVYKAVVSSDKSGMIEYWTG), 271–309 (TDLYEFAKCKAYPTSVCFSPDGKKIATIGSDRKVRIFRF), 345–386 (AVER…VETN), and 401–453 (MQLA…MFTK). The span at 455-478 (EPEDTKSADSDRDVFNEKPSKEEV) shows a compositional bias: basic and acidic residues. The interval 455-490 (EPEDTKSADSDRDVFNEKPSKEEVMAATQAEGPKRV) is disordered. The 156-residue stretch at 490 to 645 (VSDSAIIHTS…EDVSIINITV (156 aa)) folds into the PPIase cyclophilin-type domain.

Belongs to the cyclophilin-type PPIase family. PPIL1 subfamily. In terms of assembly, identified in the spliceosome C complex.

Its subcellular location is the nucleus. The enzyme catalyses [protein]-peptidylproline (omega=180) = [protein]-peptidylproline (omega=0). Its activity is regulated as follows. Inhibited by cyclosporin A (CsA). PPIase that catalyzes the cis-trans isomerization of proline imidic peptide bonds in oligopeptides and may therefore assist protein folding. May be involved in pre-mRNA splicing. This is Peptidylprolyl isomerase domain and WD repeat-containing protein 1 from Homo sapiens (Human).